Reading from the N-terminus, the 122-residue chain is MIIGIGNDIIEIERIEKAISKEGFKNKIYTQKELENIQKRGNRTETYAGIFSAKEAISKAIGTGVREFSLTDLEILNDDLGKPYVVVSEKLDKILRNKKENYQIEISISHSRKYATAMAIIL.

Mg(2+) is bound by residues D8 and E55.

Belongs to the P-Pant transferase superfamily. AcpS family. The cofactor is Mg(2+).

The protein resides in the cytoplasm. It catalyses the reaction apo-[ACP] + CoA = holo-[ACP] + adenosine 3',5'-bisphosphate + H(+). Transfers the 4'-phosphopantetheine moiety from coenzyme A to a Ser of acyl-carrier-protein. This Fusobacterium nucleatum subsp. nucleatum (strain ATCC 25586 / DSM 15643 / BCRC 10681 / CIP 101130 / JCM 8532 / KCTC 2640 / LMG 13131 / VPI 4355) protein is Holo-[acyl-carrier-protein] synthase.